The following is a 155-amino-acid chain: Interleukin-2 (155 aa).

Residues 1 to 20 form the signal peptide; sequence MYSMQLASCVALTLVLLVNS. Threonine 23 carries an O-linked (GalNAc...) threonine glycan. Cysteine 78 and cysteine 126 are joined by a disulfide.

It belongs to the IL-2 family.

Its subcellular location is the secreted. In terms of biological role, cytokine produced by activated CD4-positive helper T-cells and to a lesser extend activated CD8-positive T-cells and natural killer (NK) cells that plays pivotal roles in the immune response and tolerance. Binds to a receptor complex composed of either the high-affinity trimeric IL-2R (IL2RA/CD25, IL2RB/CD122 and IL2RG/CD132) or the low-affinity dimeric IL-2R (IL2RB and IL2RG). Interaction with the receptor leads to oligomerization and conformation changes in the IL-2R subunits resulting in downstream signaling starting with phosphorylation of JAK1 and JAK3. In turn, JAK1 and JAK3 phosphorylate the receptor to form a docking site leading to the phosphorylation of several substrates including STAT5. This process leads to activation of several pathways including STAT, phosphoinositide-3-kinase/PI3K and mitogen-activated protein kinase/MAPK pathways. Functions as a T-cell growth factor and can increase NK-cell cytolytic activity as well. Promotes strong proliferation of activated B-cells and subsequently immunoglobulin production. Plays a pivotal role in regulating the adaptive immune system by controlling the survival and proliferation of regulatory T-cells, which are required for the maintenance of immune tolerance. Moreover, participates in the differentiation and homeostasis of effector T-cell subsets, including Th1, Th2, Th17 as well as memory CD8-positive T-cells. In Rattus norvegicus (Rat), this protein is Interleukin-2 (Il2).